The primary structure comprises 319 residues: Myoblast determination protein 1 (319 aa).

M1 participates in a covalent cross-link: Peptide (Met-Gly) (interchain with G-Cter in ubiquitin). N6-methyllysine; by EHMT2 is present on K104. Residues 109–160 (DRRKAATMRERRRLSKVNEAFETLKRCTSSNPNQRLPKVEILRNAIRYIEGL) form the bHLH domain. Disordered regions lie at residues 174–222 (AAAA…GARR) and 267–319 (PALL…YQVL). Polar residues predominate over residues 197–207 (SDASSPRSNCS). The span at 267 to 276 (PALLLADAPP) shows a compositional bias: low complexity.

In terms of assembly, efficient DNA binding requires dimerization with another bHLH protein. Seems to form active heterodimers with ITF-2. Interacts with SUV39H1. Interacts with DDX5. Interacts with CHD2. Interacts with TSC22D3. Interacts with SETD3. Interacts with P-TEFB complex; promotes the transcriptional activity of MYOD1 through its CDK9-mediated phosphorylation. Interacts with CSRP3. Interacts with NUPR1. Phosphorylated by CDK9. This phosphorylation promotes its function in muscle differentiation. In terms of processing, acetylated by a complex containing EP300 and PCAF. The acetylation is essential to activate target genes. Conversely, its deacetylation by SIRT1 inhibits its function. Post-translationally, ubiquitinated on the N-terminus; which is required for proteasomal degradation. Methylation at Lys-104 by EHMT2/G9a inhibits myogenic activity.

The protein localises to the nucleus. Functionally, acts as a transcriptional activator that promotes transcription of muscle-specific target genes and plays a role in muscle differentiation. Together with MYF5 and MYOG, co-occupies muscle-specific gene promoter core region during myogenesis. Induces fibroblasts to differentiate into myoblasts. Interacts with and is inhibited by the twist protein. This interaction probably involves the basic domains of both proteins. The chain is Myoblast determination protein 1 (MYOD1) from Ovis aries (Sheep).